The primary structure comprises 249 residues: Proteasome activator complex subunit 1 (249 aa).

The interval 60 to 101 (PLDIPVPDPVKEKEKGERKKQQEKEDKDEKKKGEDEDKGPPC) is disordered. Basic and acidic residues predominate over residues 68-98 (PVKEKEKGERKKQQEKEDKDEKKKGEDEDKG).

Belongs to the PA28 family. In terms of assembly, heterodimer of PSME1 and PSME2, which forms a hexameric ring. PSME1 can form homoheptamers.

Functionally, implicated in immunoproteasome assembly and required for efficient antigen processing. The PA28 activator complex enhances the generation of class I binding peptides by altering the cleavage pattern of the proteasome. In Macaca fascicularis (Crab-eating macaque), this protein is Proteasome activator complex subunit 1 (PSME1).